The sequence spans 390 residues: Isotocin receptor (390 aa).

Residues 1-48 lie on the Extracellular side of the membrane; sequence MEEMFKEQDFWSFNESSRNSTVGNETFGGNQTVNPLKRNEEVAKVEVT. Asparagine 14, asparagine 19, asparagine 24, and asparagine 30 each carry an N-linked (GlcNAc...) asparagine glycan. The helical transmembrane segment at 49-69 threads the bilayer; the sequence is VLALVLFLALAGNLCVLIAIY. Topologically, residues 70-86 are cytoplasmic; sequence TAKHTQSRMYYLMKHLS. Residues 87–107 traverse the membrane as a helical segment; the sequence is IADLVVAVFQVLPQLIWDITF. Over 108-124 the chain is Extracellular; that stretch reads RFYGPDFLCRLVKYLQT. Residues cysteine 116 and cysteine 191 are joined by a disulfide bond. A helical transmembrane segment spans residues 125–145; it reads VGMFASTYMLVLMSIDRCIAI. The Cytoplasmic segment spans residues 146–160; sequence CQPLRSLHKRKDRCY. The chain crosses the membrane as a helical span at residues 161 to 181; that stretch reads VIVSWALSLVFSVPQVYIFSL. Residues 182 to 206 lie on the Extracellular side of the membrane; sequence REIGNGVYDCWGDFVQPWGAKAYIT. The helical transmembrane segment at 207–227 threads the bilayer; it reads WISLTIYIIPVAILGGCYGLI. The Cytoplasmic segment spans residues 228-276; sequence SFKIWQNFKRKTKKDQCITLTTAASKANALARVSSVKLVSKAKITTVKM. The helical transmembrane segment at 277-297 threads the bilayer; that stretch reads TFVIVLAYIVCWTPFFFVQMW. Over 298-311 the chain is Extracellular; sequence SAWDPEAPREAMPF. The chain crosses the membrane as a helical span at residues 312–332; that stretch reads IISMLLASLNSCCNPWIYMFF. The Cytoplasmic segment spans residues 333 to 390; that stretch reads AGHLFHDLKQSLLCCSTLYLKSSQCRCDQEHDSRKSNCSTYVIKSTSSQRSITQSSIT.

It belongs to the G-protein coupled receptor 1 family. Vasopressin/oxytocin receptor subfamily. Expressed in brain, intestine, bladder, skeletal muscle, lateral line, gills and kidney.

It localises to the cell membrane. Functionally, binds to isotocin. Can also be activated by vasotocin, mesotocin, oxytocin and Arg-vasopressin, although these have lower potencies than isotocin. Produces an induction of membrane chloride currents indicating that it is coupled to the inositol phosphate/calcium pathway. The polypeptide is Isotocin receptor (Catostomus commersonii (White sucker)).